The primary structure comprises 434 residues: Histidinol dehydrogenase (434 aa).

Tyr-130, Gln-192, and Asn-215 together coordinate NAD(+). Substrate-binding residues include Ser-238, Gln-260, and His-263. Zn(2+) is bound by residues Gln-260 and His-263. Catalysis depends on proton acceptor residues Glu-328 and His-329. Positions 329, 362, 416, and 421 each coordinate substrate. A Zn(2+)-binding site is contributed by Asp-362. His-421 is a Zn(2+) binding site.

It belongs to the histidinol dehydrogenase family. It depends on Zn(2+) as a cofactor.

The enzyme catalyses L-histidinol + 2 NAD(+) + H2O = L-histidine + 2 NADH + 3 H(+). Its pathway is amino-acid biosynthesis; L-histidine biosynthesis; L-histidine from 5-phospho-alpha-D-ribose 1-diphosphate: step 9/9. Catalyzes the sequential NAD-dependent oxidations of L-histidinol to L-histidinaldehyde and then to L-histidine. This chain is Histidinol dehydrogenase, found in Synechococcus sp. (strain ATCC 27144 / PCC 6301 / SAUG 1402/1) (Anacystis nidulans).